Here is a 621-residue protein sequence, read N- to C-terminus: DNA mismatch repair protein MutL (621 aa).

It belongs to the DNA mismatch repair MutL/HexB family.

In terms of biological role, this protein is involved in the repair of mismatches in DNA. It is required for dam-dependent methyl-directed DNA mismatch repair. May act as a 'molecular matchmaker', a protein that promotes the formation of a stable complex between two or more DNA-binding proteins in an ATP-dependent manner without itself being part of a final effector complex. This is DNA mismatch repair protein MutL from Petrotoga mobilis (strain DSM 10674 / SJ95).